The chain runs to 149 residues: Ribosome-binding factor A (149 aa).

It belongs to the RbfA family. Monomer. Binds 30S ribosomal subunits, but not 50S ribosomal subunits or 70S ribosomes.

The protein localises to the cytoplasm. One of several proteins that assist in the late maturation steps of the functional core of the 30S ribosomal subunit. Associates with free 30S ribosomal subunits (but not with 30S subunits that are part of 70S ribosomes or polysomes). Required for efficient processing of 16S rRNA. May interact with the 5'-terminal helix region of 16S rRNA. The protein is Ribosome-binding factor A of Caulobacter vibrioides (strain ATCC 19089 / CIP 103742 / CB 15) (Caulobacter crescentus).